Reading from the N-terminus, the 816-residue chain is Neuroligin-4, Y-linked (816 aa).

Positions 1–43 (MLRPQGLLWLPLLFTSVCVMLNSNVLLWITALAIKFTLIDSQA) are cleaved as a signal peptide. At 44 to 676 (QYPVVNTNYG…TKRDYSTELS (633 aa)) the chain is on the extracellular side. N-linked (GlcNAc...) asparagine glycosylation occurs at N102. Cystine bridges form between C110–C146 and C306–C317. The tract at residues 359-364 (QGEFLN) is interaction with NRXN1. The cysteines at positions 476 and 510 are disulfide-linked. N-linked (GlcNAc...) asparagine glycosylation is present at N511. The segment at 636–659 (TKRPAITPANNPKHSKDPHKTGPE) is disordered. A compositionally biased stretch (basic and acidic residues) spans 649 to 658 (HSKDPHKTGP). The helical transmembrane segment at 677 to 697 (VTIAVGASLLFLNILAFAALY) threads the bilayer. At 698-816 (YKKDKRRHET…LPHGHSTTRV (119 aa)) the chain is on the cytoplasmic side. A Phosphoserine modification is found at S712.

The protein belongs to the type-B carboxylesterase/lipase family. As to quaternary structure, homodimer. Interacts with NRXN1 in a calcium-dependent manner. Interaction with neurexins is mediated by heparan sulfate glycan modification on neurexin. Interacts through its C-terminus with DLG4/PSD-95 third PDZ domain. In terms of tissue distribution, expressed in fetal and adult brain, prostate and testis.

It is found in the cell membrane. The protein localises to the postsynaptic density membrane. Cell surface protein involved in cell-cell-interactions via its interactions with neurexin family members. The protein is Neuroligin-4, Y-linked (NLGN4Y) of Homo sapiens (Human).